We begin with the raw amino-acid sequence, 403 residues long: Acetylornithine aminotransferase (403 aa).

Pyridoxal 5'-phosphate is bound by residues 107–108 and F140; that span reads GA. Residue R143 participates in N(2)-acetyl-L-ornithine binding. 225–228 lines the pyridoxal 5'-phosphate pocket; that stretch reads DEVQ. Position 254 is an N6-(pyridoxal phosphate)lysine (K254). Position 282 (S282) interacts with N(2)-acetyl-L-ornithine. T283 is a binding site for pyridoxal 5'-phosphate.

This sequence belongs to the class-III pyridoxal-phosphate-dependent aminotransferase family. ArgD subfamily. As to quaternary structure, homodimer. The cofactor is pyridoxal 5'-phosphate.

The protein localises to the cytoplasm. It carries out the reaction N(2)-acetyl-L-ornithine + 2-oxoglutarate = N-acetyl-L-glutamate 5-semialdehyde + L-glutamate. The protein operates within amino-acid biosynthesis; L-arginine biosynthesis; N(2)-acetyl-L-ornithine from L-glutamate: step 4/4. The polypeptide is Acetylornithine aminotransferase (Vibrio vulnificus (strain YJ016)).